A 328-amino-acid chain; its full sequence is Urokinase plasminogen activator surface receptor (328 aa).

Positions 1 to 24 (MGLLRRRLLLLVVVVTTCVPASQG) are cleaved as a signal peptide. UPAR/Ly6 domains lie at 25–118 (LRCI…GRYL), 118–213 (LECA…PPNG), and 214–299 (FQCY…RPTG). Intrachain disulfides connect Cys27–Cys48, Cys30–Cys36, and Cys41–Cys69. N-linked (GlcNAc...) asparagine glycosylation occurs at Asn76. 11 cysteine pairs are disulfide-bonded: Cys95/Cys100, Cys120/Cys147, Cys123/Cys130, Cys140/Cys169, Cys175/Cys192, Cys193/Cys198, Cys216/Cys244, Cys219/Cys227, Cys237/Cys263, Cys269/Cys288, and Cys289/Cys294. N-linked (GlcNAc...) asparagine glycans are attached at residues Asn184, Asn194, Asn222, Asn255, Asn283, and Asn290. Gly299 carries the GPI-anchor amidated glycine lipid modification. Residues 300–328 (GAPGPGPAHLILIASLLLTLRLWGIPLWT) constitute a propeptide, removed in mature form.

As to quaternary structure, monomer. Interacts (via the UPAR/Ly6 domains) with SRPX2. Interacts with MRC2. Interacts with SORL1 (via N-terminal ectodomain); this interaction decreases PLAUR internalization. The ternary complex composed of PLAUR-PLAU-SERPINE1 also interacts with SORL1. Interacts with CD82; this interaction prevents PLAUR from binding to its high affinity ligand PLAU.

The protein localises to the cell membrane. It is found in the secreted. Functionally, acts as a receptor for urokinase plasminogen activator. Plays a role in localizing and promoting plasmin formation. Mediates the proteolysis-independent signal transduction activation effects of U-PA. The polypeptide is Urokinase plasminogen activator surface receptor (Plaur) (Rattus norvegicus (Rat)).